Reading from the N-terminus, the 234-residue chain is 7-cyano-7-deazaguanine synthase (234 aa).

15-25 is a binding site for ATP; sequence LSGGLDSSTCL. Residues Cys199, Cys208, Cys211, and Cys214 each contribute to the Zn(2+) site.

This sequence belongs to the QueC family. Requires Zn(2+) as cofactor.

It catalyses the reaction 7-carboxy-7-deazaguanine + NH4(+) + ATP = 7-cyano-7-deazaguanine + ADP + phosphate + H2O + H(+). The protein operates within purine metabolism; 7-cyano-7-deazaguanine biosynthesis. Catalyzes the ATP-dependent conversion of 7-carboxy-7-deazaguanine (CDG) to 7-cyano-7-deazaguanine (preQ(0)). The chain is 7-cyano-7-deazaguanine synthase from Anaeromyxobacter dehalogenans (strain 2CP-C).